The following is a 982-amino-acid chain: Zinc finger and BTB domain-containing protein 4 (982 aa).

The 102-residue stretch at 30–131 (CDVTLIAGDT…IYSARLALPG (102 aa)) folds into the BTB domain. K40 participates in a covalent cross-link: Glycyl lysine isopeptide (Lys-Gly) (interchain with G-Cter in SUMO2). Residues 71–103 (TGGSAPSPATTTAASSSSSSPPPASPHSSSPPR) are disordered. Residues 74–89 (SAPSPATTTAASSSSS) are compositionally biased toward low complexity. The interaction with CBFA2T3 stretch occupies residues 165–324 (VPPAPTSMVT…CRYCEKVFAL (160 aa)). A C2H2-type 1; atypical zinc finger spans residues 210-232 (FPCPRCGKSFIHPKRLQTHEAQC). The interval 234 to 255 (RGSNTRGSAGLGPGVSGSGGPA) is disordered. Gly residues predominate over residues 242-255 (AGLGPGVSGSGGPA). 3 consecutive C2H2-type zinc fingers follow at residues 285–307 (YVCA…SNVH), 313–335 (YPCR…EVWH), and 341–364 (YQCI…RAFH). Position 367 is a phosphoserine (S367). The interval 404 to 578 (KTYSQGAPEA…QLQAPPPLCQ (175 aa)) is disordered. Residues 430-446 (SPQPLPPPAPEPGPPPS) are compositionally biased toward pro residues. The span at 467 to 477 (AAGGGPAGTGG) shows a compositional bias: gly residues. Composition is skewed to low complexity over residues 478–488 (SQAASVITYTT) and 507–529 (ATPT…ATAT). Residue K548 forms a Glycyl lysine isopeptide (Lys-Gly) (interchain with G-Cter in SUMO2) linkage. Over residues 552–565 (GLSGSGGSPTGTGR) the composition is skewed to gly residues. Residue K590 forms a Glycyl lysine isopeptide (Lys-Gly) (interchain with G-Cter in SUMO2) linkage. The span at 591–600 (RRISETDLRP) shows a compositional bias: basic and acidic residues. Disordered stretches follow at residues 591 to 700 (RRIS…ERRH), 715 to 738 (LRKH…SSTR), 759 to 839 (QRHA…GGGS), and 854 to 880 (GGSR…GDRM). Residues 604–627 (SGEEVEESEEEEEEEEEEDQEEQE) show a composition bias toward acidic residues. A compositionally biased stretch (basic and acidic residues) spans 628–637 (ESKAGGEDQL). 2 C2H2-type zinc fingers span residues 700-722 (HRCG…QEAH) and 739-761 (FTCP…GQRH). Residues T769 and T771 each carry the phosphothreonine; by HIPK2 modification. The span at 799–820 (SSSSGEAGSGSAAAAEASESAS) shows a compositional bias: low complexity. T953 bears the Phosphothreonine; by HIPK2 mark.

In terms of assembly, interacts with HIPK2. Interacts with CBFA2T3. Interacts with ZBTB38. Post-translationally, phosphorylated by HIPK2. This phosphorylation reduces stability and triggers ZBTB4 protein degradation in response to DNA damage. Expressed in adult and aged myogenic satellite cells.

The protein localises to the nucleus. Its subcellular location is the chromosome. Transcriptional repressor with bimodal DNA-binding specificity. Represses transcription in a methyl-CpG-dependent manner. Binds with a higher affinity to methylated CpG dinucleotides in the consensus sequence 5'-CGCG-3' but can also bind to the non-methylated consensus sequence 5'-CTGCNA-3' also known as the consensus kaiso binding site (KBS). Can also bind specifically to a single methyl-CpG pair and can bind hemimethylated DNA but with a lower affinity compared to methylated DNA. Plays a role in postnatal myogenesis, may be involved in the regulation of satellite cells self-renewal. The protein is Zinc finger and BTB domain-containing protein 4 (Zbtb4) of Mus musculus (Mouse).